The sequence spans 199 residues: NAD(P)H dehydrogenase (quinone) (199 aa).

The Flavodoxin-like domain occupies 4 to 190 (VLVLYYSAYG…NGARYQGRTI (187 aa)). Residues 10–15 (SAYGHI) and 78–80 (TRF) contribute to the FMN site. Y12 is a binding site for NAD(+). W98 provides a ligand contact to substrate. FMN contacts are provided by residues 113–119 (STATQHG) and H134.

It belongs to the WrbA family. FMN serves as cofactor.

The catalysed reaction is a quinone + NADH + H(+) = a quinol + NAD(+). The enzyme catalyses a quinone + NADPH + H(+) = a quinol + NADP(+). The chain is NAD(P)H dehydrogenase (quinone) from Afipia carboxidovorans (strain ATCC 49405 / DSM 1227 / KCTC 32145 / OM5) (Oligotropha carboxidovorans).